A 393-amino-acid polypeptide reads, in one-letter code: Stearoyl-[acyl-carrier-protein] 9-desaturase, chloroplastic (393 aa).

A chloroplast-targeting transit peptide spans 1-30; the sequence is MALNFNSPTFQSIKTTRRPCSPLRSPRVFM. Glutamate 135, glutamate 173, histidine 176, glutamate 226, glutamate 259, and histidine 262 together coordinate Fe cation.

This sequence belongs to the fatty acid desaturase type 2 family. As to quaternary structure, homodimer. It depends on Fe(2+) as a cofactor.

It is found in the plastid. The protein resides in the chloroplast. The catalysed reaction is octadecanoyl-[ACP] + 2 reduced [2Fe-2S]-[ferredoxin] + O2 + 2 H(+) = (9Z)-octadecenoyl-[ACP] + 2 oxidized [2Fe-2S]-[ferredoxin] + 2 H2O. It participates in lipid metabolism; fatty acid metabolism. In terms of biological role, converts stearoyl-ACP to oleoyl-ACP by introduction of a cis double bond between carbons 9 and 10 of the acyl chain. This Solanum commersonii (Commerson's wild potato) protein is Stearoyl-[acyl-carrier-protein] 9-desaturase, chloroplastic.